The following is a 471-amino-acid chain: Uronate isomerase (471 aa).

This sequence belongs to the metallo-dependent hydrolases superfamily. Uronate isomerase family.

It carries out the reaction D-glucuronate = D-fructuronate. The catalysed reaction is aldehydo-D-galacturonate = keto-D-tagaturonate. It participates in carbohydrate metabolism; pentose and glucuronate interconversion. The sequence is that of Uronate isomerase from Xanthomonas campestris pv. campestris (strain B100).